The following is a 66-amino-acid chain: Putative transmembrane protein ORF66 (66 aa).

Topologically, residues 1–6 are cytoplasmic; the sequence is MSDVDD. Residues 7–27 traverse the membrane as a helical segment; the sequence is TIVDSIAIVGAILIGIFLIVV. Residues 28–39 are Extracellular-facing; sequence SVSNTSLFNNTE. Residues 40–60 form a helical membrane-spanning segment; sequence YDSMINSVLVIISSVIAYTLG. Residues 61-66 lie on the Cytoplasmic side of the membrane; that stretch reads KRRSKS.

It is found in the host membrane. The polypeptide is Putative transmembrane protein ORF66 (Acidianus filamentous virus 2 (isolate Italy/Pozzuoli) (AFV-2)).